Consider the following 207-residue polypeptide: Cilia- and flagella-associated protein 418 (207 aa).

The required for interaction with FAM161A stretch occupies residues 1–75; the sequence is MAEDLDELLD…LINEIFEEPH (75 aa).

Interacts (via N-terminus) with FAM161A (via central region); the interaction is direct. In terms of tissue distribution, expressed in the retina (at protein level).

It localises to the cytoplasm. Its subcellular location is the photoreceptor inner segment. Functionally, may be involved in photoreceptor outer segment disk morphogenesis. This is Cilia- and flagella-associated protein 418 (CFAP418) from Bos taurus (Bovine).